A 488-amino-acid polypeptide reads, in one-letter code: Inosine-5'-monophosphate dehydrogenase (488 aa).

2 consecutive CBS domains span residues I94–V150 and M154–E215. NAD(+) contacts are provided by residues D249, D249–S251, and G299–G301. 2 residues coordinate K(+): G301 and G303. S304 is an IMP binding site. C306 is a binding site for K(+). The active-site Thioimidate intermediate is the C306. IMP-binding positions include D339–G341, G362–S363, and Y386–G390. R402 acts as the Proton acceptor in catalysis. Residue E416 participates in IMP binding. 3 residues coordinate K(+): E470, S471, and H472.

It belongs to the IMPDH/GMPR family. In terms of assembly, homotetramer. It depends on K(+) as a cofactor.

It catalyses the reaction IMP + NAD(+) + H2O = XMP + NADH + H(+). It participates in purine metabolism; XMP biosynthesis via de novo pathway; XMP from IMP: step 1/1. Mycophenolic acid (MPA) is a non-competitive inhibitor that prevents formation of the closed enzyme conformation by binding to the same site as the amobile flap. In contrast, mizoribine monophosphate (MZP) is a competitive inhibitor that induces the closed conformation. MPA is a potent inhibitor of mammalian IMPDHs but a poor inhibitor of the bacterial enzymes. MZP is a more potent inhibitor of bacterial IMPDH. Catalyzes the conversion of inosine 5'-phosphate (IMP) to xanthosine 5'-phosphate (XMP), the first committed and rate-limiting step in the de novo synthesis of guanine nucleotides, and therefore plays an important role in the regulation of cell growth. The protein is Inosine-5'-monophosphate dehydrogenase of Haemophilus influenzae (strain ATCC 51907 / DSM 11121 / KW20 / Rd).